The primary structure comprises 469 residues: Origin recognition complex subunit 6 (469 aa).

Composition is skewed to low complexity over residues 218-234 (SSTL…TAPK) and 275-308 (ATPT…LSST). Disordered stretches follow at residues 218–241 (SSTL…PIPS), 275–309 (ATPT…SSTN), 356–423 (ESPF…EGDL), and 436–469 (KEQQ…SFFK). Basic and acidic residues-rich tracts occupy residues 380 to 390 (SRDELEKESEL) and 409 to 423 (QKEK…EGDL). The segment covering 454-469 (TPVNATKQLTLDSFFK) has biased composition (polar residues).

Belongs to the ORC6 family. As to quaternary structure, ORC is composed of six subunits.

The protein localises to the nucleus. In terms of biological role, component of the origin recognition complex (ORC) that binds origins of replication. DNA-binding is ATP-dependent, however specific DNA sequences that define origins of replication have not been identified so far. ORC is required to assemble the pre-replication complex necessary to initiate DNA replication. The protein is Origin recognition complex subunit 6 (orcF) of Dictyostelium discoideum (Social amoeba).